Here is a 462-residue protein sequence, read N- to C-terminus: ATP synthase subunit beta (462 aa).

Residue 150–157 coordinates ATP; that stretch reads GGAGVGKT.

Belongs to the ATPase alpha/beta chains family. As to quaternary structure, F-type ATPases have 2 components, CF(1) - the catalytic core - and CF(0) - the membrane proton channel. CF(1) has five subunits: alpha(3), beta(3), gamma(1), delta(1), epsilon(1). CF(0) has three main subunits: a(1), b(2) and c(9-12). The alpha and beta chains form an alternating ring which encloses part of the gamma chain. CF(1) is attached to CF(0) by a central stalk formed by the gamma and epsilon chains, while a peripheral stalk is formed by the delta and b chains.

It localises to the cell membrane. It catalyses the reaction ATP + H2O + 4 H(+)(in) = ADP + phosphate + 5 H(+)(out). Its function is as follows. Produces ATP from ADP in the presence of a proton gradient across the membrane. The catalytic sites are hosted primarily by the beta subunits. The sequence is that of ATP synthase subunit beta from Wigglesworthia glossinidia brevipalpis.